Consider the following 214-residue polypeptide: Probable DNA (cytosine-5)-methyltransferase (214 aa).

The active site involves cysteine 62.

This sequence belongs to the class I-like SAM-binding methyltransferase superfamily. C5-methyltransferase family. Probably requires another subunit for function.

The enzyme catalyses a 2'-deoxycytidine in DNA + S-adenosyl-L-methionine = a 5-methyl-2'-deoxycytidine in DNA + S-adenosyl-L-homocysteine + H(+). This is probably the methylase that recognizes and modifies 5'-CpG-3'. The protein is Probable DNA (cytosine-5)-methyltransferase of Dryophytes versicolor (chameleon treefrog).